Here is a 269-residue protein sequence, read N- to C-terminus: MEMO1 family protein TV1383 (269 aa).

Belongs to the MEMO1 family.

In Thermoplasma volcanium (strain ATCC 51530 / DSM 4299 / JCM 9571 / NBRC 15438 / GSS1), this protein is MEMO1 family protein TV1383.